We begin with the raw amino-acid sequence, 133 residues long: Interleukin-4 (133 aa).

Residues 1-24 (MGLTYQLIPALVCLLAFTSTFVHG) form the signal peptide. N-linked (GlcNAc...) asparagine glycans are attached at residues Asn-28, Asn-45, Asn-62, Asn-84, Asn-96, and Asn-102. 2 cysteine pairs are disulfide-bonded: Cys-48-Cys-85 and Cys-70-Cys-113.

It belongs to the IL-4/IL-13 family.

Its subcellular location is the secreted. Functionally, participates in at least several B-cell activation processes as well as of other cell types. It is a costimulator of DNA-synthesis. It induces the expression of class II MHC molecules on resting B-cells. It enhances both secretion and cell surface expression of IgE and IgG1. It also regulates the expression of the low affinity Fc receptor for IgE (CD23) on both lymphocytes and monocytes. Positively regulates IL31RA expression in macrophages. Stimulates autophagy in dendritic cells by interfering with mTORC1 signaling and through the induction of RUFY4. This Felis catus (Cat) protein is Interleukin-4 (IL4).